The chain runs to 211 residues: Abscisic acid receptor PYL7 (211 aa).

The tract at residues 29–180 (HHCRENQCTS…NLKSLACVSE (152 aa)) is START-like. Disulfide bonds link C31–C161 and C36–C161. Abscisate is bound by residues K65, 93–98 (ATTSTE), 120–126 (RLKNYSS), and E145. Positions 89–93 (SGLPA) match the Gate loop motif. The short motif at 119 to 121 (HRL) is the Latch loop element.

Belongs to the PYR/PYL/RCAR abscisic acid intracellular receptor family. In terms of assembly, homodimer. Binds ABA on one subunit only. Binds to CARs protein in an ABA-independent manner, both at the plasma membrane and in the nucleus. Interacts with ABI1, and possibly with other PP2Cs.

Its subcellular location is the cytoplasm. The protein resides in the nucleus. It localises to the cell membrane. In terms of biological role, receptor for abscisic acid (ABA) required for ABA-mediated responses such as stomatal closure and germination inhibition. Inhibits the activity of group-A protein phosphatases type 2C (PP2Cs) when activated by ABA. In Arabidopsis thaliana (Mouse-ear cress), this protein is Abscisic acid receptor PYL7 (PYL7).